A 197-amino-acid chain; its full sequence is Transmembrane 4 L6 family member 5 (197 aa).

At 1-9 (MCTGKCARC) the chain is on the cytoplasmic side. The helical transmembrane segment at 10-30 (VGLSLITLCLVCIVANALLLV) threads the bilayer. Topologically, residues 31-46 (PNGETSWTNTNHLSLQ) are extracellular. A helical transmembrane segment spans residues 47-67 (VWLMGGFIGGGLMVLCPGIAA). Residues 68 to 90 (VRAGGKGCCGAGCCGNRCRMLRS) lie on the Cytoplasmic side of the membrane. Residues 91–111 (VFSSAFGVLGAIYCLSVSGAG) traverse the membrane as a helical segment. Residues 91–197 (VFSSAFGVLG…DCRKKQDTPH (107 aa)) form an interaction with MTOR and CASTOR1 region. The Extracellular portion of the chain corresponds to 112–157 (LRNGPRCLMNGEWGYHFEDTAGAYLLNRTLWDRCEAPPRVVPWNVT). 124-129 (WGYHFE) serves as a coordination point for L-arginine. N-linked (GlcNAc...) asparagine glycans are attached at residues Asn138 and Asn155. The helical transmembrane segment at 158–178 (LFSLLVAASCLEIVLCGIQLV) threads the bilayer. Over 179-197 (NATIGVFCGDCRKKQDTPH) the chain is Cytoplasmic.

Belongs to the L6 tetraspanin family. Interacts with MTOR; the interaction is positively regulated by arginine and is negatively regulated by leucine. Interacts with SLC38A9. Interacts with SLC7A1; the interaction is negatively regulated by arginine. Interacts with CASTOR1; the interaction is positively regulated by leucine and is negatively regulated by arginine. Intestine. Overexpressed in pancreatic cancers.

Its subcellular location is the lysosome membrane. It is found in the cell membrane. Its function is as follows. Acts as a lysosomal membrane arginine sensor. Forms a complex with MTOR and SLC38A9 on lysosomal membranes in an arginine-regulated manner, leading to arginine efflux which enables the activation of mTORC1 which subsequently leads to RPS6KB1 and EIF4EBP1 phosphorylations. Facilitates cell cycle G1/S phase progression and the translocation of the CDK4-CCND1 complex into the nucleus. CDKN1B and RHOA/ROCK signaling activity are involved in TM4SF5-mediated acceleration of G1/S phase progression. In Homo sapiens (Human), this protein is Transmembrane 4 L6 family member 5 (TM4SF5).